Here is a 144-residue protein sequence, read N- to C-terminus: Heme transporter hrg1-B (144 aa).

4 helical membrane passes run 6–26 (IYISVGYSTFGMLVGFSAFIV), 38–58 (AMGGLSGVLALWALVTHIMYI), 71–91 (FFMFVSSVFSLLAVAAFATFI), and 107–127 (FYLSAVWSFMTLKWAFLLGLY). The short motif at 140-141 (IL) is the Di-leucine motif element.

It belongs to the HRG family.

It is found in the endosome membrane. The protein localises to the lysosome membrane. Its subcellular location is the cytoplasmic vesicle. It localises to the phagosome membrane. The catalysed reaction is heme b(in) = heme b(out). In terms of biological role, heme transporter that regulates intracellular heme availability through the endosomal or lysosomal compartment. In macrophages, is the heme transporter for heme-iron recycling. Essential for macrophage iron homeostasis, transports heme from the phagolysosome to the cytoplasm during erythrophagocytosis (EP). The chain is Heme transporter hrg1-B (slc48a1a) from Danio rerio (Zebrafish).